The sequence spans 396 residues: Ribosomal RNA small subunit methyltransferase H (396 aa).

Residues 101–103 (GGH), Asp-120, Tyr-147, Asp-171, and Gln-178 each bind S-adenosyl-L-methionine.

This sequence belongs to the methyltransferase superfamily. RsmH family.

Its subcellular location is the cytoplasm. The catalysed reaction is cytidine(1402) in 16S rRNA + S-adenosyl-L-methionine = N(4)-methylcytidine(1402) in 16S rRNA + S-adenosyl-L-homocysteine + H(+). Specifically methylates the N4 position of cytidine in position 1402 (C1402) of 16S rRNA. The sequence is that of Ribosomal RNA small subunit methyltransferase H from Mycobacterium bovis (strain ATCC BAA-935 / AF2122/97).